A 338-amino-acid polypeptide reads, in one-letter code: Cytochrome bd ubiquinol oxidase subunit 2 (338 aa).

Helical transmembrane passes span Leu7–Phe27, Ile50–Ala70, Trp75–Met95, Val119–Phe139, Ile163–Leu183, Met196–Ala216, Glu227–Ile247, Phe256–Pro276, and Ile306–Phe326.

The protein belongs to the cytochrome ubiquinol oxidase subunit 2 family. In terms of assembly, heterodimer of subunits I and II. The cofactor is heme b. Requires heme d cis-diol as cofactor.

The protein resides in the cell membrane. The catalysed reaction is 2 a ubiquinol + O2(in) + 4 H(+)(in) = 2 a ubiquinone + 2 H2O(in) + 4 H(+)(out). The sequence is that of Cytochrome bd ubiquinol oxidase subunit 2 (cydB) from Bacillus subtilis (strain 168).